The primary structure comprises 191 residues: Dephospho-CoA kinase (191 aa).

In terms of domain architecture, DPCK spans Ala3 to Val191. Ala11–Phe16 lines the ATP pocket.

This sequence belongs to the CoaE family.

The protein localises to the cytoplasm. The enzyme catalyses 3'-dephospho-CoA + ATP = ADP + CoA + H(+). Its pathway is cofactor biosynthesis; coenzyme A biosynthesis; CoA from (R)-pantothenate: step 5/5. Functionally, catalyzes the phosphorylation of the 3'-hydroxyl group of dephosphocoenzyme A to form coenzyme A. This Rickettsia conorii (strain ATCC VR-613 / Malish 7) protein is Dephospho-CoA kinase.